Reading from the N-terminus, the 764-residue chain is Thyrotropin receptor (764 aa).

The first 21 residues, 1–21, serve as a signal peptide directing secretion; that stretch reads MRPTPLLRLALLLVLPSSLWG. Residues 22-413 are Extracellular-facing; it reads ERCPSPPCEC…EFNPCEDIMG (392 aa). Cysteine 31 and cysteine 41 form a disulfide bridge. The stretch at 51–74 is one LRR 1 repeat; it reads PPSTQTLKFIETHLKTIPSRAFSN. Asparagine 77 and asparagine 99 each carry an N-linked (GlcNAc...) asparagine glycan. LRR repeat units lie at residues 125-150, 152-174, 176-199, 201-223, and 225-248; these read LPLL…IYST, VFFI…AFQG, SNET…AFNG, KLDA…AFAG, and YSGP…GLEH. 2 N-linked (GlcNAc...) asparagine glycosylation sites follow: asparagine 177 and asparagine 198. N-linked (GlcNAc...) asparagine glycosylation is present at asparagine 302. The residue at position 385 (tyrosine 385) is a Sulfotyrosine. Residues 414-441 traverse the membrane as a helical segment; that stretch reads YKFLRIVVWFVSLLALLGNVFVLVILLT. Residues 442–450 lie on the Cytoplasmic side of the membrane; the sequence is SHYKLTVPR. Residues 451-473 form a helical membrane-spanning segment; sequence FLMCNLAFADFCMGLYLLLIASV. Over 474–494 the chain is Extracellular; it reads DLYTQSEYYNHAIDWQTGPGC. Cysteine 494 and cysteine 569 form a disulfide bridge. A helical membrane pass occupies residues 495 to 517; sequence NTAGFFTVFASELSVYTLTVITL. The Cytoplasmic segment spans residues 518–537; that stretch reads ERWYAITFAMHLDRKIRLWH. The helical transmembrane segment at 538-560 threads the bilayer; sequence AYVIMLGGWVCCFLLALLPLVGI. Residues 561–580 lie on the Extracellular side of the membrane; sequence SSYAKVSICLPMDTETPLAL. Residues 581-602 form a helical membrane-spanning segment; that stretch reads AYIILVLLLNIIAFIIVCACYV. At 603–625 the chain is on the cytoplasmic side; it reads KIYITVRNPHYNPGDKDTRIAKR. The helical transmembrane segment at 626–649 threads the bilayer; the sequence is MAVLIFTDFMCMAPISFYALSALM. Topologically, residues 650 to 660 are extracellular; sequence NKPLITVTNSK. The helical transmembrane segment at 661–682 threads the bilayer; it reads ILLVLFYPLNSCANPFLYAIFT. Topologically, residues 683–764 are cytoplasmic; sequence KAFQRDVFML…TSKEYKQTVL (82 aa). The short motif at 762–764 is the PDZ-binding element; that stretch reads TVL.

The protein belongs to the G-protein coupled receptor 1 family. FSH/LSH/TSH subfamily. In terms of assembly, interacts with heterodimer GPHA2:GPHB5; this interaction stimulates cAMP production. Interacts (via the PDZ-binding motif) with SCRIB; regulates TSHR trafficking and function. In terms of processing, glycosylated. Post-translationally, sulfated. Sulfation on Tyr-385 plays a role in thyrotropin receptor binding and activation.

It is found in the cell membrane. Its subcellular location is the basolateral cell membrane. In terms of biological role, receptor for the thyroid-stimulating hormone (TSH) or thyrotropin. Also acts as a receptor for the heterodimeric glycoprotein hormone (GPHA2:GPHB5) or thyrostimulin. The activity of this receptor is mediated by G proteins which activate adenylate cyclase. Plays a central role in controlling thyroid cell metabolism. The protein is Thyrotropin receptor (TSHR) of Ovis aries (Sheep).